The sequence spans 163 residues: Large ribosomal subunit protein uL15 (163 aa).

This sequence belongs to the universal ribosomal protein uL15 family. Part of the 50S ribosomal subunit.

In terms of biological role, binds to the 23S rRNA. This is Large ribosomal subunit protein uL15 from Orientia tsutsugamushi (strain Ikeda) (Rickettsia tsutsugamushi).